The chain runs to 835 residues: BCL11 transcription factor A (835 aa).

Residues Met-1 to Leu-12 show a composition bias toward basic residues. Residues Met-1–Gly-41 form a disordered region. A required for nuclear body formation and for SUMO1 recruitment region spans residues Met-1–Arg-210. A C2HC-type zinc finger spans residues Leu-45–Cys-71. Zn(2+)-binding residues include Cys-48, Cys-51, His-66, and Cys-71. Ser-86 is modified (phosphoserine). Glycyl lysine isopeptide (Lys-Gly) (interchain with G-Cter in SUMO2) cross-links involve residues Lys-123 and Lys-164. A C2H2-type 1 zinc finger spans residues Tyr-170–His-193. Position 205 is a phosphoserine (Ser-205). Arg-271 carries the asymmetric dimethylarginine modification. Residues Ala-323 to Ser-376 form a disordered region. 2 positions are modified to phosphoserine: Ser-332 and Ser-337. The segment covering Leu-355–Pro-372 has biased composition (pro residues). C2H2-type zinc fingers lie at residues Lys-377–His-399 and Tyr-405–His-429. Residues Lys-421 to Lys-430 are compositionally biased toward basic residues. Disordered regions lie at residues Lys-421 to Ser-458, Lys-471 to Asp-512, and Arg-572 to Lys-619. Polar residues predominate over residues Gly-441–Pro-450. 2 positions are modified to phosphoserine: Ser-446 and Ser-447. The segment covering Asn-482–Thr-506 has biased composition (acidic residues). Positions His-574–Thr-584 are enriched in basic and acidic residues. Residue Ser-608 is modified to Phosphoserine. Residue Lys-620 forms a Glycyl lysine isopeptide (Lys-Gly) (interchain with G-Cter in SUMO2) linkage. Ser-625 and Ser-630 each carry phosphoserine. Lys-634 is covalently cross-linked (Glycyl lysine isopeptide (Lys-Gly) (interchain with G-Cter in SUMO1)). Positions Asp-678–Arg-740 are disordered. Positions Ser-682 to Ser-696 are enriched in low complexity. A Phosphothreonine modification is found at Thr-701. Positions Leu-706–Gly-720 are enriched in gly residues. Residues Glu-737–Glu-835 are DNA-binding. The C2H2-type 4 zinc finger occupies Asp-742 to His-764. Positions 744, 747, 760, and 764 each coordinate Zn(2+). Residues Thr-765–Pro-769 are disordered. The C2H2-type 5 zinc-finger motif lies at Tyr-770–His-792. The Zn(2+) site is built by Cys-772, Cys-775, His-788, and His-792. The disordered stretch occupies residues Gly-793–Val-799. Residues Tyr-800–His-823 form a C2H2-type 6 zinc finger. Zn(2+) contacts are provided by Cys-802, Cys-805, His-818, and His-823. Residue Lys-833 forms a Glycyl lysine isopeptide (Lys-Gly) (interchain with G-Cter in SUMO2) linkage.

Homotetrameric; self-associates via C2HC-type zinc finger domain. Interacts with MTA2, a component of the nucleosome remodeling and deacetylase (NuRD) repressor complex. Interacts (via its C2H2-type zinc finger domains 4, 5 and 6) with promoter region of gamma-globulin. Interacts with NR2F1, PIAS3, NR2F2 and NR2F6. Isoform 1, isoform 2 and isoform 3 form homodimers and heterodimers. Isoform 2 interacts with TBR1. Post-translationally, sumoylated with SUMO1. In terms of tissue distribution, expressed at high levels in brain, spleen thymus, bone marrow and testis. Expressed in CD34-positive myeloid precursor cells, B-cells, monocytes and megakaryocytes. Expression is tightly regulated during B-cell development. As to expression, expressed in fetal and adult brain, and in the plasmacytoid dendritic cell.

It localises to the cytoplasm. It is found in the nucleus. Its subcellular location is the chromosome. The protein localises to the nucleus matrix. In terms of biological role, transcription factor. Associated with the BAF SWI/SNF chromatin remodeling complex. Binds to the 5'-TGACCA-3' sequence motif in regulatory regions of target genes, including a distal promoter of the HBG1 hemoglobin subunit gamma-1 gene. Involved in regulation of the developmental switch from gamma- to beta-globin, probably via direct repression of HBG1; hence indirectly repressing fetal hemoglobin (HbF) level. Involved in brain development. May play a role in hematopoiesis. Essential factor in lymphopoiesis required for B-cell formation in fetal liver. May function as a modulator of the transcriptional repression activity of NR2F2. The polypeptide is BCL11 transcription factor A (BCL11A) (Homo sapiens (Human)).